The chain runs to 158 residues: NADH-quinone oxidoreductase subunit B (158 aa).

Residues Cys-37, Cys-38, Cys-102, and Cys-132 each contribute to the [4Fe-4S] cluster site.

It belongs to the complex I 20 kDa subunit family. As to quaternary structure, NDH-1 is composed of 14 different subunits. Subunits NuoB, C, D, E, F, and G constitute the peripheral sector of the complex. [4Fe-4S] cluster serves as cofactor.

It is found in the cell inner membrane. The enzyme catalyses a quinone + NADH + 5 H(+)(in) = a quinol + NAD(+) + 4 H(+)(out). In terms of biological role, NDH-1 shuttles electrons from NADH, via FMN and iron-sulfur (Fe-S) centers, to quinones in the respiratory chain. The immediate electron acceptor for the enzyme in this species is believed to be ubiquinone. Couples the redox reaction to proton translocation (for every two electrons transferred, four hydrogen ions are translocated across the cytoplasmic membrane), and thus conserves the redox energy in a proton gradient. This Thioalkalivibrio sulfidiphilus (strain HL-EbGR7) protein is NADH-quinone oxidoreductase subunit B.